A 411-amino-acid chain; its full sequence is Phospholipase ABHD3 (411 aa).

The helical; Signal-anchor for type II membrane protein transmembrane segment at 25–45 (VGFFGSGVGFSLILGFSVAYA) threads the bilayer. Positions 140–247 (PTVLLLPGLT…PLKAAATFSV (108 aa)) constitute an AB hydrolase-1 domain. Catalysis depends on charge relay system residues Ser220, Asp346, and His375.

The protein belongs to the AB hydrolase superfamily. AB hydrolase 4 family.

The protein resides in the membrane. It carries out the reaction a 1,2-diacyl-sn-glycero-3-phosphocholine + H2O = a 1-acyl-sn-glycero-3-phosphocholine + a fatty acid + H(+). The enzyme catalyses a 1,2-diacyl-sn-glycero-3-phosphocholine + H2O = a 2-acyl-sn-glycero-3-phosphocholine + a fatty acid + H(+). It catalyses the reaction 1-tetradecanoyl-2-(9Z,12Z-octadecadienoyl)-sn-glycero-3-phosphocholine + H2O = 2-(9Z,12Z-octadecadienoyl)-sn-glycero-3-phosphocholine + tetradecanoate + H(+). The catalysed reaction is 1-tetradecanoyl-2-(9Z,12Z-octadecadienoyl)-sn-glycero-3-phosphocholine + H2O = 1-tetradecanoyl-sn-glycero-3-phosphocholine + (9Z,12Z)-octadecadienoate + H(+). It carries out the reaction 1-tetradecanoyl-2-(5Z,8Z,11Z,14Z-eicosatetraenoyl)-sn-glycero-3-phosphocholine + H2O = 2-(5Z,8Z,11Z,14Z)-eicosatetraenoyl-sn-glycero-3-phosphocholine + tetradecanoate + H(+). The enzyme catalyses 1-tetradecanoyl-2-(4Z,7Z,10Z,13Z,16Z,19Z-docosahexaenoyl)-sn-glycero-3-phosphocholine + H2O = 2-(4Z,7Z,10Z,13Z,16Z,19Z-docosahexaenoyl)-sn-glycero-3-phosphocholine + tetradecanoate + H(+). It catalyses the reaction 1,2-ditetradecanoyl-sn-glycero-3-phosphocholine + H2O = 2-tetradecanoyl-sn-glycero-3-phosphocholine + tetradecanoate + H(+). The catalysed reaction is 1-octadecanoyl-2-acetyl-sn-glycero-3-phosphocholine + H2O = 1-octadecanoyl-sn-glycero-3-phosphocholine + acetate + H(+). It carries out the reaction 1,2-ditetradecanoyl-sn-glycero-3-phosphocholine + H2O = 1-tetradecanoyl-sn-glycero-3-phosphocholine + tetradecanoate + H(+). The enzyme catalyses 1-octadecanoyl-2-pentanoyl-sn-glycero-3-phosphocholine + H2O = pentanoate + 1-octadecanoyl-sn-glycero-3-phosphocholine + H(+). It catalyses the reaction 1-octadecanoyl-2-hexanoyl-sn-glycero-3-phosphocholine + H2O = hexanoate + 1-octadecanoyl-sn-glycero-3-phosphocholine + H(+). The catalysed reaction is 1-octadecanoyl-2-octanoyl-sn-glycero-3-phosphocholine + H2O = 1-octadecanoyl-sn-glycero-3-phosphocholine + octanoate + H(+). It carries out the reaction 1-octadecanoyl-2-nonanoyl-sn-glycero-3-phosphocholine + H2O = nonanoate + 1-octadecanoyl-sn-glycero-3-phosphocholine + H(+). The enzyme catalyses 1-O-hexadecyl-2-nonadioyl-sn-glycero-3-phosphocholine + H2O = nonanedioate + 1-O-hexadecyl-sn-glycero-3-phosphocholine + H(+). It catalyses the reaction 1-hexadecanoyl-2-nonadioyl-sn-glycero-3-phosphocholine + H2O = nonanedioate + 1-hexadecanoyl-sn-glycero-3-phosphocholine + H(+). The catalysed reaction is 1-hexadecanoyl-2-(9-oxononanoyl)-sn-glycero-3-phosphocholine + H2O = 9-oxononanoate + 1-hexadecanoyl-sn-glycero-3-phosphocholine + H(+). It carries out the reaction 1-hexadecanoyl-2-(5-oxopentanoyl)-sn-glycero-3-phosphocholine + H2O = 5-oxopentanoate + 1-hexadecanoyl-sn-glycero-3-phosphocholine + H(+). The enzyme catalyses 1-hexadecanoyl-2-glutaroyl-sn-glycero-3-phosphocholine + H2O = glutarate + 1-hexadecanoyl-sn-glycero-3-phosphocholine + H(+). It catalyses the reaction 1-O-hexadecyl-2-acetyl-sn-glycero-3-phosphocholine + H2O = 1-O-hexadecyl-sn-glycero-3-phosphocholine + acetate + H(+). In terms of biological role, phospholipase that may play a role in phospholipids remodeling. May selectively cleave myristate (C14)-containing phosphatidylcholines through its predominant phospholipase 1 activity, cleaving preferentially acyl groups in sn1 position. In parallel, may have a minor phospholipase 2 activity acting on acyl groups in position sn2. In addition to (C14)-containing phosphatidylcholines, may also act on other medium-chain-containing and oxidatively truncated phospholipids. This chain is Phospholipase ABHD3, found in Bos taurus (Bovine).